A 345-amino-acid chain; its full sequence is S-adenosylmethionine:tRNA ribosyltransferase-isomerase (345 aa).

Belongs to the QueA family. Monomer.

The protein localises to the cytoplasm. The enzyme catalyses 7-aminomethyl-7-carbaguanosine(34) in tRNA + S-adenosyl-L-methionine = epoxyqueuosine(34) in tRNA + adenine + L-methionine + 2 H(+). Its pathway is tRNA modification; tRNA-queuosine biosynthesis. In terms of biological role, transfers and isomerizes the ribose moiety from AdoMet to the 7-aminomethyl group of 7-deazaguanine (preQ1-tRNA) to give epoxyqueuosine (oQ-tRNA). This Aromatoleum aromaticum (strain DSM 19018 / LMG 30748 / EbN1) (Azoarcus sp. (strain EbN1)) protein is S-adenosylmethionine:tRNA ribosyltransferase-isomerase.